The primary structure comprises 118 residues: MARIAGINIPDQKHTVIALTAIYGIGKTRSQAICVAAGIAENVKISELSEEQIEKLRDEVAKYVVEGDLRREVTLSIKRLMDLGTYRGLRHRRGLPVRGQRTKTNARTRKGPRKPIKK.

Residues R92–K118 are disordered.

This sequence belongs to the universal ribosomal protein uS13 family. As to quaternary structure, part of the 30S ribosomal subunit. Forms a loose heterodimer with protein S19. Forms two bridges to the 50S subunit in the 70S ribosome.

Its function is as follows. Located at the top of the head of the 30S subunit, it contacts several helices of the 16S rRNA. In the 70S ribosome it contacts the 23S rRNA (bridge B1a) and protein L5 of the 50S subunit (bridge B1b), connecting the 2 subunits; these bridges are implicated in subunit movement. Contacts the tRNAs in the A and P-sites. This chain is Small ribosomal subunit protein uS13, found in Yersinia enterocolitica serotype O:8 / biotype 1B (strain NCTC 13174 / 8081).